We begin with the raw amino-acid sequence, 307 residues long: 4-hydroxythreonine-4-phosphate dehydrogenase (307 aa).

Substrate-binding residues include histidine 121 and threonine 122. Residues histidine 150, histidine 189, and histidine 245 each contribute to the a divalent metal cation site. The substrate site is built by lysine 253, asparagine 262, and arginine 271.

Belongs to the PdxA family. As to quaternary structure, homodimer. Zn(2+) serves as cofactor. Requires Mg(2+) as cofactor. Co(2+) is required as a cofactor.

The protein localises to the cytoplasm. It catalyses the reaction 4-(phosphooxy)-L-threonine + NAD(+) = 3-amino-2-oxopropyl phosphate + CO2 + NADH. Its pathway is cofactor biosynthesis; pyridoxine 5'-phosphate biosynthesis; pyridoxine 5'-phosphate from D-erythrose 4-phosphate: step 4/5. Its function is as follows. Catalyzes the NAD(P)-dependent oxidation of 4-(phosphooxy)-L-threonine (HTP) into 2-amino-3-oxo-4-(phosphooxy)butyric acid which spontaneously decarboxylates to form 3-amino-2-oxopropyl phosphate (AHAP). The protein is 4-hydroxythreonine-4-phosphate dehydrogenase of Sulfurimonas denitrificans (strain ATCC 33889 / DSM 1251) (Thiomicrospira denitrificans (strain ATCC 33889 / DSM 1251)).